Consider the following 285-residue polypeptide: Ubiquinone biosynthesis protein COQ4, mitochondrial (285 aa).

A mitochondrion-targeting transit peptide spans 1 to 11 (MPPTVRQGIRT). Zn(2+) is bound by residues H166, D167, H170, and E182.

The protein belongs to the COQ4 family. Component of a multi-subunit COQ enzyme complex, composed of at least COQ3, COQ4, COQ5, COQ6, COQ7 and COQ9. Requires Zn(2+) as cofactor.

The protein localises to the mitochondrion inner membrane. The enzyme catalyses a 4-hydroxy-3-methoxy-5-(all-trans-polyprenyl)benzoate + H(+) = a 2-methoxy-6-(all-trans-polyprenyl)phenol + CO2. Its pathway is cofactor biosynthesis; ubiquinone biosynthesis. Lyase that catalyzes the C1-decarboxylation of 4-hydroxy-3-methoxy-5-(all-trans-polyprenyl)benzoic acid into 2-methoxy-6-(all-trans-polyprenyl)phenol during ubiquinone biosynthesis. The polypeptide is Ubiquinone biosynthesis protein COQ4, mitochondrial (Paracoccidioides brasiliensis (strain Pb18)).